Reading from the N-terminus, the 324-residue chain is Acetyl-coenzyme A carboxylase carboxyl transferase subunit alpha (324 aa).

In terms of domain architecture, CoA carboxyltransferase C-terminal spans 37–291 (ILEDKLENLE…DLMIRKTFEQ (255 aa)).

It belongs to the AccA family. As to quaternary structure, acetyl-CoA carboxylase is a heterohexamer composed of biotin carboxyl carrier protein (AccB), biotin carboxylase (AccC) and two subunits each of ACCase subunit alpha (AccA) and ACCase subunit beta (AccD).

The protein resides in the cytoplasm. It carries out the reaction N(6)-carboxybiotinyl-L-lysyl-[protein] + acetyl-CoA = N(6)-biotinyl-L-lysyl-[protein] + malonyl-CoA. It functions in the pathway lipid metabolism; malonyl-CoA biosynthesis; malonyl-CoA from acetyl-CoA: step 1/1. Component of the acetyl coenzyme A carboxylase (ACC) complex. First, biotin carboxylase catalyzes the carboxylation of biotin on its carrier protein (BCCP) and then the CO(2) group is transferred by the carboxyltransferase to acetyl-CoA to form malonyl-CoA. The chain is Acetyl-coenzyme A carboxylase carboxyl transferase subunit alpha from Bacillus cereus (strain G9842).